The following is a 100-amino-acid chain: Urease subunit gamma (100 aa).

The protein belongs to the urease gamma subunit family. In terms of assembly, heterotrimer of UreA (gamma), UreB (beta) and UreC (alpha) subunits. Three heterotrimers associate to form the active enzyme.

It localises to the cytoplasm. The catalysed reaction is urea + 2 H2O + H(+) = hydrogencarbonate + 2 NH4(+). The protein operates within nitrogen metabolism; urea degradation; CO(2) and NH(3) from urea (urease route): step 1/1. The chain is Urease subunit gamma from Chelativorans sp. (strain BNC1).